The primary structure comprises 279 residues: Eukaryotic translation initiation factor 3 subunit G (279 aa).

3 disordered regions span residues 1–26 (MSTG…IANP), 66–115 (RKNW…KAHE), and 152–171 (TPSG…AAGA). At Ser78 the chain carries Phosphoserine. The span at 102 to 115 (KQDEKKEEEDKAHE) shows a compositional bias: basic and acidic residues. Positions 152-163 (TPSGTTPEPTSE) are enriched in low complexity. The RRM domain maps to 197-276 (TTLKVSQLNS…LILHLEWSKK (80 aa)).

The protein belongs to the eIF-3 subunit G family. In terms of assembly, component of the eukaryotic translation initiation factor 3 (eIF-3) complex.

Its subcellular location is the cytoplasm. RNA-binding component of the eukaryotic translation initiation factor 3 (eIF-3) complex, which is involved in protein synthesis of a specialized repertoire of mRNAs and, together with other initiation factors, stimulates binding of mRNA and methionyl-tRNAi to the 40S ribosome. The eIF-3 complex specifically targets and initiates translation of a subset of mRNAs involved in cell proliferation. This subunit can bind 18S rRNA. The polypeptide is Eukaryotic translation initiation factor 3 subunit G (Candida albicans (strain SC5314 / ATCC MYA-2876) (Yeast)).